The chain runs to 101 residues: Synaptobrevin-B (101 aa).

The Cytoplasmic portion of the chain corresponds to 1-76 (MSNNPNNSGQ…RRQMWCRNMK (76 aa)). The v-SNARE coiled-coil homology domain occupies 13-73 (KTQSILQEVD…VTIRRQMWCR (61 aa)). A helical; Anchor for type IV membrane protein transmembrane segment spans residues 77–97 (LQLIIIAVVILVLAVILIPII). The Vesicular portion of the chain corresponds to 98 to 101 (MKFV).

This sequence belongs to the synaptobrevin family.

It is found in the cytoplasmic vesicle. Its subcellular location is the secretory vesicle membrane. Functionally, involved in the targeting and/or fusion of transport vesicles to their target membrane. This chain is Synaptobrevin-B (sybB), found in Dictyostelium discoideum (Social amoeba).